A 170-amino-acid chain; its full sequence is MAQIRIHEVNTRIENEVKVSKFLQEEGVLYEKWNISKLPPHLNENYSLTDENKAEILAVFSKEIADVSARRGYKAHDVISLSNSTPNLDELLINFQKEHHHTDDEVRFIVSGHGIFAIEGKDGTFFDVELEPGDLISVPENARHYFTLQDDRQVVAIRIFVTTEGWVPIY.

Positions 99, 101, 105, and 144 each coordinate Fe(2+). Ni(2+) contacts are provided by histidine 99, histidine 101, glutamate 105, and histidine 144.

This sequence belongs to the acireductone dioxygenase (ARD) family. In terms of assembly, monomer. It depends on Fe(2+) as a cofactor. Ni(2+) is required as a cofactor.

It carries out the reaction 1,2-dihydroxy-5-(methylsulfanyl)pent-1-en-3-one + O2 = 3-(methylsulfanyl)propanoate + CO + formate + 2 H(+). The enzyme catalyses 1,2-dihydroxy-5-(methylsulfanyl)pent-1-en-3-one + O2 = 4-methylsulfanyl-2-oxobutanoate + formate + 2 H(+). The protein operates within amino-acid biosynthesis; L-methionine biosynthesis via salvage pathway; L-methionine from S-methyl-5-thio-alpha-D-ribose 1-phosphate: step 5/6. Its function is as follows. Catalyzes 2 different reactions between oxygen and the acireductone 1,2-dihydroxy-3-keto-5-methylthiopentene (DHK-MTPene) depending upon the metal bound in the active site. Fe-containing acireductone dioxygenase (Fe-ARD) produces formate and 2-keto-4-methylthiobutyrate (KMTB), the alpha-ketoacid precursor of methionine in the methionine recycle pathway. Ni-containing acireductone dioxygenase (Ni-ARD) produces methylthiopropionate, carbon monoxide and formate, and does not lie on the methionine recycle pathway. The chain is Acireductone dioxygenase from Bacillus anthracis.